Here is a 258-residue protein sequence, read N- to C-terminus: Cell division protein FtsQ (258 aa).

The Cytoplasmic portion of the chain corresponds to 1–29 (MAKNAPAPRGARRKPVKKVGVPLRERVAT). Residues 30-50 (AVPWMLVGSVAMVSLLAVIYL) traverse the membrane as a helical segment. Topologically, residues 51 to 258 (PAALDGYPIR…MAVTWREQQS (208 aa)) are periplasmic. Residues 57 to 127 (YPIRKVGVDG…DTVVLTVEER (71 aa)) form the POTRA domain.

This sequence belongs to the FtsQ/DivIB family. FtsQ subfamily. In terms of assembly, part of a complex composed of FtsB, FtsL and FtsQ.

The protein resides in the cell inner membrane. Essential cell division protein. May link together the upstream cell division proteins, which are predominantly cytoplasmic, with the downstream cell division proteins, which are predominantly periplasmic. May control correct divisome assembly. This Alcanivorax borkumensis (strain ATCC 700651 / DSM 11573 / NCIMB 13689 / SK2) protein is Cell division protein FtsQ.